A 203-amino-acid chain; its full sequence is Small ribosomal subunit protein uS4 (203 aa).

The region spanning Arg93–Val156 is the S4 RNA-binding domain.

This sequence belongs to the universal ribosomal protein uS4 family. Part of the 30S ribosomal subunit. Contacts protein S5. The interaction surface between S4 and S5 is involved in control of translational fidelity.

In terms of biological role, one of the primary rRNA binding proteins, it binds directly to 16S rRNA where it nucleates assembly of the body of the 30S subunit. With S5 and S12 plays an important role in translational accuracy. The polypeptide is Small ribosomal subunit protein uS4 (Streptococcus agalactiae serotype Ia (strain ATCC 27591 / A909 / CDC SS700)).